A 207-amino-acid chain; its full sequence is Protein N-terminal glutamine amidohydrolase (207 aa).

Catalysis depends on residues C30, H83, and D99.

It belongs to the NTAQ1 family. Monomer.

It localises to the cytoplasm. It is found in the cytosol. The protein resides in the nucleus. The catalysed reaction is N-terminal L-glutaminyl-[protein] + H2O = N-terminal L-glutamyl-[protein] + NH4(+). Its function is as follows. Mediates the side-chain deamidation of N-terminal glutamine residues to glutamate, an important step in N-end rule pathway of protein degradation. Conversion of the resulting N-terminal glutamine to glutamate renders the protein susceptible to arginylation, polyubiquitination and degradation as specified by the N-end rule. Does not act on substrates with internal or C-terminal glutamine and does not act on non-glutamine residues in any position. Does not deaminate acetylated N-terminal glutamine. With the exception of proline, all tested second-position residues on substrate peptides do not greatly influence the activity. In contrast, a proline at position 2, virtually abolishes deamidation of N-terminal glutamine. The chain is Protein N-terminal glutamine amidohydrolase (NTAQ1) from Bos taurus (Bovine).